Reading from the N-terminus, the 119-residue chain is Ribonuclease P protein component (119 aa).

It belongs to the RnpA family. In terms of assembly, consists of a catalytic RNA component (M1 or rnpB) and a protein subunit.

The catalysed reaction is Endonucleolytic cleavage of RNA, removing 5'-extranucleotides from tRNA precursor.. RNaseP catalyzes the removal of the 5'-leader sequence from pre-tRNA to produce the mature 5'-terminus. It can also cleave other RNA substrates such as 4.5S RNA. The protein component plays an auxiliary but essential role in vivo by binding to the 5'-leader sequence and broadening the substrate specificity of the ribozyme. This Edwardsiella ictaluri (strain 93-146) protein is Ribonuclease P protein component.